The following is an 897-amino-acid chain: High molecular weight rhoptry protein 3 (897 aa).

An N-terminal signal peptide occupies residues 1 to 24 (MRSKHLVTLFIITFLSFSTVKVWG). Cystine bridges form between C157/C231, C244/C253, C262/C276, C421/C620, and C475/C536. Residues 597-615 (FVLYFISIISVLYINEYYY) form a helical membrane-spanning segment. Disordered regions lie at residues 788 to 845 (KEQS…SNLK) and 859 to 897 (QLDK…ENEL). The span at 792-801 (KSTSAASTSD) shows a compositional bias: polar residues. Low complexity predominate over residues 802–817 (ELSGSEGPSTESTSTG). The residue at position 804 (S804) is a Phosphoserine. Basic and acidic residues predominate over residues 820 to 832 (GEDKTTDNTYKEM). Residues 865–876 (PKKKKSKRKKKR) are compositionally biased toward basic residues. Positions 877–889 (DSSSDRILLEESK) are enriched in basic and acidic residues.

Component of the RhopH complex, composed of CLAG3.1/CLAG3.2, RhopH2 and RhopH3 with a 1:1:1 subunit stoichiometry. Interacts with CLAG3.1/CLAG3.2. Interacts with CDPK1; the interaction promotes RhopH3 phosphorylation in merozoites. In terms of processing, proteolytically cleaved near C-terminus.

The protein localises to the host cell membrane. It is found in the parasitophorous vacuole membrane. The protein resides in the cytoplasmic vesicle. It localises to the secretory vesicle. Its subcellular location is the rhoptry. Its function is as follows. Participates in the formation of new permeability pathways in Plasmodium-infected erythrocytes enabling the uptake of nutrients from the blood plasma. Required for maintaining invasion capacity of merozoites. Required for the trophozoite to schizont developmental transition of the intracellular parasite. This Plasmodium falciparum protein is High molecular weight rhoptry protein 3.